A 152-amino-acid chain; its full sequence is D-aminoacyl-tRNA deacylase (152 aa).

A Gly-cisPro motif, important for rejection of L-amino acids motif is present at residues 142–143; sequence GP.

This sequence belongs to the DTD family. Homodimer.

The protein resides in the cytoplasm. It catalyses the reaction glycyl-tRNA(Ala) + H2O = tRNA(Ala) + glycine + H(+). The catalysed reaction is a D-aminoacyl-tRNA + H2O = a tRNA + a D-alpha-amino acid + H(+). Its function is as follows. An aminoacyl-tRNA editing enzyme that deacylates mischarged D-aminoacyl-tRNAs. Also deacylates mischarged glycyl-tRNA(Ala), protecting cells against glycine mischarging by AlaRS. Acts via tRNA-based rather than protein-based catalysis; rejects L-amino acids rather than detecting D-amino acids in the active site. By recycling D-aminoacyl-tRNA to D-amino acids and free tRNA molecules, this enzyme counteracts the toxicity associated with the formation of D-aminoacyl-tRNA entities in vivo and helps enforce protein L-homochirality. The protein is D-aminoacyl-tRNA deacylase of Burkholderia vietnamiensis (strain G4 / LMG 22486) (Burkholderia cepacia (strain R1808)).